The sequence spans 630 residues: Cytochrome B pre-mRNA-processing protein 2 (630 aa).

It localises to the mitochondrion. Its function is as follows. Appears to be specifically required for the splicing of the terminal intron (bI5) of the cytochrome b pre-mRNA. Can also stimulates the splicing of the omega intron of the precursor of large ribosomal RNA. In Saccharomyces paradoxus (Yeast), this protein is Cytochrome B pre-mRNA-processing protein 2 (CBP2).